The primary structure comprises 631 residues: Dolichyl-diphosphooligosaccharide--protein glycosyltransferase subunit 2 (631 aa).

Positions Met-1–Ala-22 are cleaved as a signal peptide. Topologically, residues Leu-23 to Val-540 are lumenal. An N-linked (GlcNAc...) asparagine glycan is attached at Asn-106. A Glycyl lysine isopeptide (Lys-Gly) (interchain with G-Cter in ubiquitin) cross-link involves residue Lys-154. The chain crosses the membrane as a helical span at residues Val-541 to Ile-561. Over Arg-562 to Thr-571 the chain is Cytoplasmic. Residues Phe-572–Ile-592 form a helical membrane-spanning segment. Topologically, residues Tyr-593–Gln-596 are lumenal. Residues Leu-597–Gly-617 traverse the membrane as a helical segment. Topologically, residues Asn-618–His-631 are cytoplasmic.

It belongs to the SWP1 family. In terms of assembly, component of the oligosaccharyltransferase (OST) complex. OST exists in two different complex forms which contain common core subunits RPN1, RPN2, OST48, OST4, DAD1 and TMEM258, either STT3A or STT3B as catalytic subunits, and form-specific accessory subunits. STT3A complex assembly occurs through the formation of 3 subcomplexes. Subcomplex 1 contains RPN1 and TMEM258, subcomplex 2 contains the STT3A-specific subunits STT3A, DC2/OSTC, and KCP2 as well as the core subunit OST4, and subcomplex 3 contains RPN2, DAD1, and OST48. The STT3A complex can form stable complexes with the Sec61 complex or with both the Sec61 and TRAP complexes. Interacts with DDI2. Interacts with TMEM35A/NACHO.

It is found in the endoplasmic reticulum. It localises to the endoplasmic reticulum membrane. It functions in the pathway protein modification; protein glycosylation. Functionally, subunit of the oligosaccharyl transferase (OST) complex that catalyzes the initial transfer of a defined glycan (Glc(3)Man(9)GlcNAc(2) in eukaryotes) from the lipid carrier dolichol-pyrophosphate to an asparagine residue within an Asn-X-Ser/Thr consensus motif in nascent polypeptide chains, the first step in protein N-glycosylation. N-glycosylation occurs cotranslationally and the complex associates with the Sec61 complex at the channel-forming translocon complex that mediates protein translocation across the endoplasmic reticulum (ER). All subunits are required for a maximal enzyme activity. In Mus musculus (Mouse), this protein is Dolichyl-diphosphooligosaccharide--protein glycosyltransferase subunit 2.